We begin with the raw amino-acid sequence, 95 residues long: Kunitz-type serine protease inhibitor PIVL (95 aa).

A signal peptide spans 1–24 (MSSGGLLLLLGLLTLWAELTPVSS). Q25 is subject to Pyrrolidone carboxylic acid. The 51-residue stretch at 31-81 (CYLPADPAECNAYMPRFYYDSASNKCKEFIYGGCRGNANNFKNRAECRHTC) folds into the BPTI/Kunitz inhibitor domain. 3 cysteine pairs are disulfide-bonded: C31-C81, C40-C64, and C56-C77. The interval 65 to 67 (RGN) is responsible for the anti-cancer effect. Positions 92 to 95 (IASN) are excised as a propeptide.

This sequence belongs to the venom Kunitz-type family. In terms of assembly, monomer. In terms of tissue distribution, expressed by the venom gland.

The protein localises to the secreted. Functionally, serine protease inhibitor that inhibits trypsin. Exhibits an anti-tumor effect and displays integrin inhibitory activity without being cytotoxic. Is able to dose-dependently inhibit the adhesion, migration and invasion of human glioblastoma U87 cells. Also impairs the function of alpha-v/beta-3 (ITGAV/ITGB3) and to a lesser extent, the activity of alpha-v/beta-6 (ITGAV/ITGB6), alpha-v/beta-5 (ITGAV/ITGB5), alpha-1/beta-1 (ITGA1/ITGB1) and alpha-5/beta-1 (ITGA5/ITGB1) integrins. This is Kunitz-type serine protease inhibitor PIVL from Macrovipera lebetina transmediterranea (Blunt-nosed viper).